Here is a 354-residue protein sequence, read N- to C-terminus: Stearoyl-CoA desaturase (354 aa).

The disordered stretch occupies residues 1-28; that stretch reads MPGHLLQEEMTSSYTTTTTTITEPPSES. At 1 to 67 the chain is on the cytoplasmic side; sequence MPGHLLQEEM…EGPPPKLEYV (67 aa). A compositionally biased stretch (low complexity) spans 8 to 28; the sequence is EEMTSSYTTTTTTITEPPSES. The chain crosses the membrane as a helical span at residues 68–88; it reads WRNIILMALLHLGALYGLVLV. A substrate-binding site is contributed by Asn70. Residues 89 to 92 are Lumenal-facing; sequence PSSK. A helical membrane pass occupies residues 93 to 113; the sequence is VYTLLWAFVYYVISIEGIGAG. At 114 to 212 the chain is on the cytoplasmic side; it reads VHRLWSHRTY…EKLVMFQRRY (99 aa). 2 residues coordinate Fe cation: His115 and His120. Residues 115–120 carry the Histidine box-1 motif; that stretch reads HRLWSH. 3 residues coordinate substrate: Asn143, Arg150, and Asp151. Positions 152, 155, and 156 each coordinate Fe cation. The Histidine box-2 signature appears at 152-156; it reads HRAHH. Residues Arg183 and Lys184 each coordinate substrate. At Ser198 the chain carries Phosphoserine. Residues 213-232 form a helical membrane-spanning segment; the sequence is YKPAILLMCFILPTFVPWYF. Residues 233–236 lie on the Lumenal side of the membrane; the sequence is WGEA. Residues 237 to 258 form a helical membrane-spanning segment; that stretch reads FVNSLCVSTFLRYTLVLNATWL. Substrate is bound at residue Trp257. The Cytoplasmic segment spans residues 259 to 354; the sequence is VNSAAHLYGY…RTGDGSCKSG (96 aa). 4 residues coordinate Fe cation: His264, His293, His296, and His297. The Histidine box-3 motif lies at 293 to 297; that stretch reads HNYHH.

It belongs to the fatty acid desaturase type 1 family. The cofactor is Fe(2+).

The protein resides in the endoplasmic reticulum membrane. The enzyme catalyses octadecanoyl-CoA + 2 Fe(II)-[cytochrome b5] + O2 + 2 H(+) = (9Z)-octadecenoyl-CoA + 2 Fe(III)-[cytochrome b5] + 2 H2O. The catalysed reaction is hexadecanoyl-CoA + 2 Fe(II)-[cytochrome b5] + O2 + 2 H(+) = (9Z)-hexadecenoyl-CoA + 2 Fe(III)-[cytochrome b5] + 2 H2O. Stearoyl-CoA desaturase that utilizes O(2) and electrons from reduced cytochrome b5 to introduce the first double bond into saturated fatty acyl-CoA substrates. Catalyzes the insertion of a cis double bond at the delta-9 position into fatty acyl-CoA substrates including palmitoyl-CoA and stearoyl-CoA. Gives rise to a mixture of 16:1 and 18:1 unsaturated fatty acids. Plays an important role in lipid biosynthesis. Plays an important role in regulating the expression of genes that are involved in lipogenesis and in regulating mitochondrial fatty acid oxidation. Plays an important role in body energy homeostasis. Contributes to the biosynthesis of membrane phospholipids, cholesterol esters and triglycerides. This is Stearoyl-CoA desaturase (SCD) from Mesocricetus auratus (Golden hamster).